The chain runs to 212 residues: Ribosomal RNA small subunit methyltransferase G (212 aa).

S-adenosyl-L-methionine-binding positions include G76, M81, 127–128 (VE), and R145.

This sequence belongs to the methyltransferase superfamily. RNA methyltransferase RsmG family.

It is found in the cytoplasm. It carries out the reaction guanosine(527) in 16S rRNA + S-adenosyl-L-methionine = N(7)-methylguanosine(527) in 16S rRNA + S-adenosyl-L-homocysteine. Functionally, specifically methylates the N7 position of guanine in position 527 of 16S rRNA. In Acinetobacter baylyi (strain ATCC 33305 / BD413 / ADP1), this protein is Ribosomal RNA small subunit methyltransferase G.